The primary structure comprises 176 residues: NAD(P)H-quinone oxidoreductase subunit 6, chloroplastic (176 aa).

A run of 5 helical transmembrane segments spans residues 10-30, 32-52, 61-81, 92-112, and 152-172; these read FLLV…VLLP, PIYS…FYIL, AQLL…VMFM, LWTV…ISLI, and FFLP…GAIA.

It belongs to the complex I subunit 6 family. In terms of assembly, NDH is composed of at least 16 different subunits, 5 of which are encoded in the nucleus.

Its subcellular location is the plastid. The protein resides in the chloroplast thylakoid membrane. The catalysed reaction is a plastoquinone + NADH + (n+1) H(+)(in) = a plastoquinol + NAD(+) + n H(+)(out). It catalyses the reaction a plastoquinone + NADPH + (n+1) H(+)(in) = a plastoquinol + NADP(+) + n H(+)(out). NDH shuttles electrons from NAD(P)H:plastoquinone, via FMN and iron-sulfur (Fe-S) centers, to quinones in the photosynthetic chain and possibly in a chloroplast respiratory chain. The immediate electron acceptor for the enzyme in this species is believed to be plastoquinone. Couples the redox reaction to proton translocation, and thus conserves the redox energy in a proton gradient. This is NAD(P)H-quinone oxidoreductase subunit 6, chloroplastic (ndhG) from Solanum bulbocastanum (Wild potato).